The chain runs to 776 residues: Lysyl oxidase homolog 2 (776 aa).

Residues 1-25 form the signal peptide; the sequence is MELHFGSCLSGCLALLVLLPSLSLA. 4 consecutive SRCR domains span residues 61–162, 191–305, 329–428, and 438–546; these read VRLA…VVCS, IRPI…VSCV, VRLR…VRCN, and VRLN…VACS. Intrachain disulfides connect C87-C151, C100-C161, C131-C141, C221-C294, C234-C304, C268-C278, C354-C417, C367-C427, and C398-C408. N-linked (GlcNAc...) asparagine glycosylation occurs at N267. N291 carries an N-linked (GlcNAc...) asparagine glycan. N-linked (GlcNAc...) asparagine glycosylation is present at N458. 3 disulfide bridges follow: C467–C532, C480–C545, and C514–C524. The interval 550–753 is lysyl-oxidase like; sequence PDLVLNAEIV…WMYNCHVGGA (204 aa). Ca(2+)-binding residues include D551 and L552. Cystine bridges form between C575–C627, C581–C697, C659–C675, and C665–C687. Cu cation-binding residues include H628, H630, and H632. N646 carries N-linked (GlcNAc...) asparagine glycosylation. The lysine tyrosylquinone (Lys-Tyr) cross-link spans 655–691; it reads KASFCLEDTECEGDIQKSYECANFGEQGITMGCWDMY. At Y691 the chain carries 2',4',5'-topaquinone. Ca(2+)-binding residues include E724, D726, N729, and N730. The cysteines at positions 734 and 748 are disulfide-linked.

This sequence belongs to the lysyl oxidase family. As to quaternary structure, component of some chromatin repressor complex. Interacts with SNAI1. Interacts with TAF10. Interacts with HSPA5. Interacts with EFEMP2. It depends on Cu cation as a cofactor. Lysine tyrosylquinone residue is required as a cofactor. In terms of processing, the lysine tyrosylquinone cross-link (LTQ) is generated by condensation of the epsilon-amino group of a lysine with a topaquinone produced by oxidation of tyrosine. Post-translationally, N-glycosylated. N-glycosylation on Asn-458 and Asn-646 may be essential for proper folding and secretion; may be composed of a fucosylated carbohydrates attached to a trimannose N-linked glycan core. As to expression, ubiquitous. Highest expression in skin, lung and thymus. Present in chondrocytes: mainly expressed by chondrocytes in healing fractures and in epiphyseal growth plates (at protein level).

Its subcellular location is the secreted. It is found in the extracellular space. It localises to the extracellular matrix. The protein localises to the basement membrane. The protein resides in the nucleus. Its subcellular location is the chromosome. It is found in the endoplasmic reticulum. The catalysed reaction is L-lysyl-[protein] + O2 + H2O = (S)-2-amino-6-oxohexanoyl-[protein] + H2O2 + NH4(+). Specifically inhibited by a mouse monoclonal antibody AB0023, inhibition occurs in a non-competitive manner. Functionally, mediates the post-translational oxidative deamination of lysine residues on target proteins leading to the formation of deaminated lysine (allysine). Acts as a transcription corepressor and specifically mediates deamination of trimethylated 'Lys-4' of histone H3 (H3K4me3), a specific tag for epigenetic transcriptional activation. Shows no activity against histone H3 when it is trimethylated on 'Lys-9' (H3K9me3) or 'Lys-27' (H3K27me3) or when 'Lys-4' is monomethylated (H3K4me1) or dimethylated (H3K4me2). Also mediates deamination of methylated TAF10, a member of the transcription factor IID (TFIID) complex, which induces release of TAF10 from promoters, leading to inhibition of TFIID-dependent transcription. LOXL2-mediated deamination of TAF10 results in transcriptional repression of genes required for embryonic stem cell pluripotency including POU5F1/OCT4, NANOG, KLF4 and SOX2. Involved in epithelial to mesenchymal transition (EMT) via interaction with SNAI1 and participates in repression of E-cadherin, probably by mediating deamination of histone H3. During EMT, involved with SNAI1 in negatively regulating pericentromeric heterochromatin transcription. SNAI1 recruits LOXL2 to pericentromeric regions to oxidize histone H3 and repress transcription which leads to release of heterochromatin component CBX5/HP1A, enabling chromatin reorganization and acquisition of mesenchymal traits. Interacts with the endoplasmic reticulum protein HSPA5 which activates the IRE1-XBP1 pathway of the unfolded protein response, leading to expression of several transcription factors involved in EMT and subsequent EMT induction. When secreted into the extracellular matrix, promotes cross-linking of extracellular matrix proteins by mediating oxidative deamination of peptidyl lysine residues in precursors to fibrous collagen and elastin. Acts as a regulator of sprouting angiogenesis, probably via collagen IV scaffolding. Acts as a regulator of chondrocyte differentiation, probably by regulating expression of factors that control chondrocyte differentiation. This Mus musculus (Mouse) protein is Lysyl oxidase homolog 2 (Loxl2).